The sequence spans 335 residues: Cholinephosphotransferase 1 (335 aa).

2 helical membrane-spanning segments follow: residues 53 to 73 (PNAI…PLIA) and 84 to 108 (FWAY…GKQA). Residue Asn-54 participates in CDP-choline binding. The Mg(2+) site is built by Asp-101 and Asp-104. A CDP-choline-binding site is contributed by Arg-109. 6 consecutive transmembrane segments (helical) span residues 116–140 (PLGE…SCIA), 151–169 (FFCC…WQTY), 181–197 (VTEV…VSAF), 213–238 (ELKF…RIIF), 267–276 (IGPGLLFLDQ), and 284–313 (EYVV…IAAH). Mg(2+) is bound at residue Asp-122. Residue His-123 is the Proton acceptor of the active site. Mg(2+) is bound at residue Asp-126.

It belongs to the CDP-alcohol phosphatidyltransferase class-I family. Requires Mg(2+) as cofactor. The cofactor is Mn(2+).

Its subcellular location is the golgi apparatus membrane. The catalysed reaction is CDP-choline + a 1,2-diacyl-sn-glycerol = a 1,2-diacyl-sn-glycero-3-phosphocholine + CMP + H(+). It carries out the reaction 1-octadecanoyl-2-(5Z,8Z,11Z,14Z-eicosatetraenoyl)-sn-glycerol + CDP-choline = 1-octadecanoyl-2-(5Z,8Z,11Z,14Z-eicosatetraenoyl)-sn-glycero-3-phosphocholine + CMP + H(+). It catalyses the reaction 1-hexadecanoyl-2-(9Z-octadecenoyl)-sn-glycerol + CDP-choline = 1-hexadecanoyl-2-(9Z-octadecenoyl)-sn-glycero-3-phosphocholine + CMP + H(+). The enzyme catalyses 1-hexadecanoyl-2-(4Z,7Z,10Z,13Z,16Z,19Z-docosahexaenoyl)-sn-glycerol + CDP-choline = 1-hexadecanoyl-2-(4Z,7Z,10Z,13Z,16Z,19Z-docosahexaenoyl)-sn-glycero-3-phosphocholine + CMP + H(+). The catalysed reaction is 1,2-dioctanoyl-sn-glycerol + CDP-choline = 1,2-dioctanoyl-sn-glycero-3-phosphocholine + CMP + H(+). Its pathway is phospholipid metabolism; phosphatidylcholine biosynthesis; phosphatidylcholine from phosphocholine: step 2/2. Its function is as follows. Catalyzes the final step of de novo phosphatidylcholine (PC) synthesis, i.e. the transfer of choline phosphate from CDP-choline to the free hydroxyl of a diacylglycerol (DAG), producing a PC. It thereby plays a central role in the formation and maintenance of vesicular membranes. This is Cholinephosphotransferase 1 (CHPT1) from Gallus gallus (Chicken).